Reading from the N-terminus, the 44-residue chain is Large ribosomal subunit protein bL34 (44 aa).

The protein belongs to the bacterial ribosomal protein bL34 family.

This chain is Large ribosomal subunit protein bL34, found in Neorickettsia sennetsu (strain ATCC VR-367 / Miyayama) (Ehrlichia sennetsu).